A 248-amino-acid chain; its full sequence is Leucyl/phenylalanyl-tRNA--protein transferase (248 aa).

This sequence belongs to the L/F-transferase family.

The protein resides in the cytoplasm. The enzyme catalyses N-terminal L-lysyl-[protein] + L-leucyl-tRNA(Leu) = N-terminal L-leucyl-L-lysyl-[protein] + tRNA(Leu) + H(+). It carries out the reaction N-terminal L-arginyl-[protein] + L-leucyl-tRNA(Leu) = N-terminal L-leucyl-L-arginyl-[protein] + tRNA(Leu) + H(+). It catalyses the reaction L-phenylalanyl-tRNA(Phe) + an N-terminal L-alpha-aminoacyl-[protein] = an N-terminal L-phenylalanyl-L-alpha-aminoacyl-[protein] + tRNA(Phe). Functions in the N-end rule pathway of protein degradation where it conjugates Leu, Phe and, less efficiently, Met from aminoacyl-tRNAs to the N-termini of proteins containing an N-terminal arginine or lysine. The polypeptide is Leucyl/phenylalanyl-tRNA--protein transferase (Rhizorhabdus wittichii (strain DSM 6014 / CCUG 31198 / JCM 15750 / NBRC 105917 / EY 4224 / RW1) (Sphingomonas wittichii)).